Consider the following 237-residue polypeptide: Ribosomal RNA small subunit methyltransferase G (237 aa).

Residues G78, F83, 129–130 (AE), and R148 each bind S-adenosyl-L-methionine. Residues 216–237 (SKKKETPNKYPRKAGTPNKKPL) form a disordered region.

Belongs to the methyltransferase superfamily. RNA methyltransferase RsmG family.

It is found in the cytoplasm. In terms of biological role, specifically methylates the N7 position of a guanine in 16S rRNA. This is Ribosomal RNA small subunit methyltransferase G from Streptococcus agalactiae serotype V (strain ATCC BAA-611 / 2603 V/R).